Reading from the N-terminus, the 196-residue chain is MWFMYVLSWLSLFIQVAFITLAVAAGLYYLAELIEEYTVATSRIIKYMIWFSTAVLIGLYVFERFPTSMIGVGLFTNLVYFGLLQTFPFIMLTSPNFILSCGLVVVNHYLAFQFFAEEYYPFSEVLAYFTFCLWIIPFAFFVSLSAGENVLPSTMQPGDDVVSNYFTKGKRGKRLGILVVFSFIKEAILPSRQKIY.

Helical transmembrane passes span 3-23 (FMYV…TLAV), 42-62 (SRII…LYVF), 70-90 (IGVG…FPFI), 97-117 (FILS…FFAE), and 125-145 (VLAY…VSLS).

It belongs to the SVP26 family. Detected in testis.

It is found in the membrane. The polypeptide is Protein TEX261 (Tex261) (Mus musculus (Mouse)).